A 230-amino-acid polypeptide reads, in one-letter code: MSKRYKQLTEKIDVTKAYSVDEASLLVKNLVSAKFDETVEVAFNLNVDPRHADQMIRGAIVLPHGTGKTVRVAVFAKGAKADEAKAAGADIVGTDDLVQQIKDGIFNFDIVVAAPDCMGLVGQIGRILGPKGMMPNPKTGTVTPDVATAVKNVKGGQVNFRVDKKGNIHAGIGKASFNADKISENLITFVKAINRHKPSSAKGRYIKNCALSLTMSPAIKLDVMQLADMK.

This sequence belongs to the universal ribosomal protein uL1 family. In terms of assembly, part of the 50S ribosomal subunit.

Its function is as follows. Binds directly to 23S rRNA. The L1 stalk is quite mobile in the ribosome, and is involved in E site tRNA release. Protein L1 is also a translational repressor protein, it controls the translation of the L11 operon by binding to its mRNA. This is Large ribosomal subunit protein uL1 from Sulfurimonas denitrificans (strain ATCC 33889 / DSM 1251) (Thiomicrospira denitrificans (strain ATCC 33889 / DSM 1251)).